A 64-amino-acid polypeptide reads, in one-letter code: Cytochrome c oxidase subunit 5C (64 aa).

The chain crosses the membrane as a helical span at residues 16 to 34; it reads VVKELVIGFSLGLVAGGFW.

Belongs to the cytochrome c oxidase subunit 5C family. Sweet potato cytochrome C oxidase consists of at least seven different polypeptides species, subunits I, II, III, IV, Va, Vb, and Vc in order of MW.

It is found in the mitochondrion inner membrane. Its function is as follows. This protein is one of the nuclear-coded polypeptide chains of cytochrome c oxidase, the terminal oxidase in mitochondrial electron transport. The sequence is that of Cytochrome c oxidase subunit 5C (COX5C) from Ipomoea batatas (Sweet potato).